The chain runs to 171 residues: Cadmium-induced protein AS8 (171 aa).

The sequence is that of Cadmium-induced protein AS8 from Arabidopsis thaliana (Mouse-ear cress).